Reading from the N-terminus, the 339-residue chain is Dicamba O-demethylase, oxygenase component (339 aa).

Positions 8–110 (WYVAALPEEL…VVERDALIWI (103 aa)) constitute a Rieske domain. [2Fe-2S] cluster-binding residues include Cys-48, His-50, Cys-67, and His-70. Fe cation is bound by residues His-159 and His-164. 3,6-dichloro-2-methoxybenzoate-binding residues include Asn-229, His-250, and Trp-284. Asp-293 is a Fe cation binding site.

Homotrimer. The dicamba O-demethylase multicomponent enzyme system is composed of an oxygenase component (DdmC) and an electron transfer component formed by a ferredoxin reductase (DdmA) and a ferredoxin (DdmB). In vitro, dicamba O-demethylase assays in which DdmA2 is substituted for DdmA1 demonstrate that the two enzymes possess nearly identical activities. Requires [2Fe-2S] cluster as cofactor.

It catalyses the reaction 3,6-dichloro-2-methoxybenzoate + 2 reduced [2Fe-2S]-[ferredoxin] + O2 + 2 H(+) = 3,6-dichlorosalicylate + formaldehyde + 2 oxidized [2Fe-2S]-[ferredoxin] + H2O. Its activity is regulated as follows. Activity enhanced by Fe(2+) and Mg(2+) ions. Component of the dicamba O-demethylase multicomponent enzyme system involved in the degradation of the herbicide dicamba. In vitro, catalyzes the O-demethylation of 2-methoxy-3,6-dichlorobenzoic acid (dicamba) to yield 3,6-dichlorosalicylic acid (DCSA) via an exocyclic monooxygenation. This Stenotrophomonas maltophilia (Pseudomonas maltophilia) protein is Dicamba O-demethylase, oxygenase component.